A 95-amino-acid chain; its full sequence is Aspartyl/glutamyl-tRNA(Asn/Gln) amidotransferase subunit C (95 aa).

It belongs to the GatC family. As to quaternary structure, heterotrimer of A, B and C subunits.

The enzyme catalyses L-glutamyl-tRNA(Gln) + L-glutamine + ATP + H2O = L-glutaminyl-tRNA(Gln) + L-glutamate + ADP + phosphate + H(+). It carries out the reaction L-aspartyl-tRNA(Asn) + L-glutamine + ATP + H2O = L-asparaginyl-tRNA(Asn) + L-glutamate + ADP + phosphate + 2 H(+). Allows the formation of correctly charged Asn-tRNA(Asn) or Gln-tRNA(Gln) through the transamidation of misacylated Asp-tRNA(Asn) or Glu-tRNA(Gln) in organisms which lack either or both of asparaginyl-tRNA or glutaminyl-tRNA synthetases. The reaction takes place in the presence of glutamine and ATP through an activated phospho-Asp-tRNA(Asn) or phospho-Glu-tRNA(Gln). In Azorhizobium caulinodans (strain ATCC 43989 / DSM 5975 / JCM 20966 / LMG 6465 / NBRC 14845 / NCIMB 13405 / ORS 571), this protein is Aspartyl/glutamyl-tRNA(Asn/Gln) amidotransferase subunit C.